A 347-amino-acid polypeptide reads, in one-letter code: Trace amine-associated receptor 4 (347 aa).

At 1–37 (MNTPDPWSSPEVQFCFAAANSSCPRKARPALVVCAMY) the chain is on the extracellular side. N20 carries an N-linked (GlcNAc...) asparagine glycan. 2 disulfide bridges follow: C23–C187 and C106–C191. A helical membrane pass occupies residues 38–58 (LIMIGAIVMTMLGNMAVIISI). Residues 59–69 (AHFKQLHSPTN) lie on the Cytoplasmic side of the membrane. A helical membrane pass occupies residues 70–90 (FLILSMATTDFLLSCVVMPFS). Over 91 to 110 (MIRSIESCWYFGDLFCKVHS) the chain is Extracellular. The helical transmembrane segment at 111–129 (CCDIMLCTTSIFHLCFISV) threads the bilayer. Over 130-149 (DRHYAVCDPLHYVTQITTRV) the chain is Cytoplasmic. A helical membrane pass occupies residues 150–170 (VGVFLLISWSVPIFFAFGLVF). The Extracellular segment spans residues 171 to 197 (SELNLIGAEDFVAAIDCTGLCVLIFNK). The extracellular Loop 2 (ECL2) stretch occupies residues 175-188 (LIGAEDFVAAIDCT). Residues 198 to 218 (LWGVLASFIAFFLPGTVMVGI) form a helical membrane-spanning segment. The Cytoplasmic portion of the chain corresponds to 219–260 (YIHIFTVAQKHARQIGTGPRTKQALSESKMKATSKKESKATK). The helical transmembrane segment at 261–281 (TLSIVMGVFVLCWLPFFVLTI) threads the bilayer. Residues 282 to 296 (TDPFIDFTTPEDLYN) are Extracellular-facing. A helical membrane pass occupies residues 297–317 (VFLWLGYFNSTFNPIIYGMFY). Topologically, residues 318-347 (PWFRKALRMIVTGTIFRSDSSTSSLHPAHP) are cytoplasmic.

Belongs to the G-protein coupled receptor 1 family. Specifically expressed in neurons of the olfactory epithelium, to discrete glomeruli predominantly localized to a confined bulb region. Present in the dorsal area of the main olfactory epithelium.

It localises to the cell membrane. Olfactory receptor specific for 2-phenylethylamine, a trace amine present at high concentration in the urine of carnivore species, playing a key role in fear and avoidance responses. 2-phenylethylamine acts as a kairomone in the chemical detection of carnivore odor and triggers fear in mice. This receptor is probably mediated by the G(s)-class of G-proteins which activate adenylate cyclase. The sequence is that of Trace amine-associated receptor 4 from Mus musculus (Mouse).